A 59-amino-acid polypeptide reads, in one-letter code: QAVRYANGYTYDIETGQVSSPYTGRVYETKGKAPFYGFGFKYPYHYYPGYYHGYPHVFY.

At glutamine 1 the chain carries Pyrrolidone carboxylic acid.

The protein is Cuticle protein 7 isoform b of Limulus polyphemus (Atlantic horseshoe crab).